The sequence spans 397 residues: AIAAIIIFLILFTIFGNALVILAVLTSRSLRAPQNLFLVSLAAADILVATLIIPFSLANELLGYWYFRRMWCKVYLALDVLFCTSSIVHLCAISLDRYWAVSRALEYNSKRTPRRIKCIILMVWLIAAVISLPSLVYKGDQGPQPSGAPQCNLNQETWYILASSIGSFFAPCLIMILVYLRIYLIAKRSHCRGPRAKGAPGKSKFKQSRQVPGGTLASAKVPNLAAHLVAAGETNGRSKPTGEKEMGETPEDSGTSTLPPSWPALPNSGQDQKEGICEASLEEEAEEEEEGEEEREEECEPQALPASPASACSPPLQQPQGSQVLATLRGQVLLGRAAGAASGQWWRRRTQLSREKRFTFVLAVVIGVFVLCWFPFFFSYSLGAICPQQCKVPHDLF.

The chain crosses the membrane as a helical span at residues 1 to 25 (AIAAIIIFLILFTIFGNALVILAVL). Over 26–36 (TSRSLRAPQNL) the chain is Cytoplasmic. Residues 37–62 (FLVSLAAADILVATLIIPFSLANELL) form a helical membrane-spanning segment. Residues 63 to 72 (GYWYFRRMWC) are Extracellular-facing. C72 and C151 are disulfide-bonded. Residues 73 to 95 (KVYLALDVLFCTSSIVHLCAISL) traverse the membrane as a helical segment. The Cytoplasmic segment spans residues 96 to 117 (DRYWAVSRALEYNSKRTPRRIK). The helical transmembrane segment at 118–140 (CIILMVWLIAAVISLPSLVYKGD) threads the bilayer. Residues 141 to 156 (QGPQPSGAPQCNLNQE) are Extracellular-facing. The helical transmembrane segment at 157 to 180 (TWYILASSIGSFFAPCLIMILVYL) threads the bilayer. Residues 181–361 (RIYLIAKRSH…LSREKRFTFV (181 aa)) lie on the Cytoplasmic side of the membrane. Disordered stretches follow at residues 193–212 (GPRA…RQVP) and 230–319 (AAGE…LQQP). The span at 280-300 (SLEEEAEEEEEGEEEREEECE) shows a compositional bias: acidic residues. A compositionally biased stretch (low complexity) spans 301 to 319 (PQALPASPASACSPPLQQP). The helical transmembrane segment at 362-385 (LAVVIGVFVLCWFPFFFSYSLGAI) threads the bilayer. Residues 386-394 (CPQQCKVPH) lie on the Extracellular side of the membrane. The chain crosses the membrane as a helical span at residues 395-397 (DLF).

The protein belongs to the G-protein coupled receptor 1 family. Adrenergic receptor subfamily. ADRA2B sub-subfamily. In terms of assembly, interacts with RAB26. Interacts with PPP1R9B.

The protein localises to the cell membrane. Functionally, alpha-2 adrenergic receptors mediate the catecholamine-induced inhibition of adenylate cyclase through the action of G proteins. This Talpa europaea (European mole) protein is Alpha-2B adrenergic receptor (ADRA2B).